A 488-amino-acid chain; its full sequence is UDP-GalNAc:beta-1,3-N-acetylgalactosaminyltransferase 2 (488 aa).

Residues 1–2 (MR) are Cytoplasmic-facing. A helical; Signal-anchor for type II membrane protein membrane pass occupies residues 3 to 23 (HLLLLFLCPCAIGVAFHLWLF). 3 N-linked (GlcNAc...) asparagine glycosylation sites follow: Asn-24, Asn-105, and Asn-162. Topologically, residues 24–488 (NFSGLFTWFP…CGNPCACEDR (465 aa)) are lumenal.

The protein belongs to the glycosyltransferase 31 family.

Its subcellular location is the golgi apparatus membrane. It localises to the endoplasmic reticulum. It catalyses the reaction 3-O-(N-acetyl-beta-D-glucosaminyl-(1-&gt;4)-alpha-D-mannosyl)-L-threonyl-[protein] + UDP-N-acetyl-alpha-D-galactosamine = 3-O-[beta-D-GalNAc-(1-&gt;3)-beta-D-GlcNAc-(1-&gt;4)-alpha-D-Man]-L-Thr-[protein] + UDP + H(+). It functions in the pathway protein modification; protein glycosylation. In terms of biological role, beta-1,3-N-acetylgalactosaminyltransferase that synthesizes a unique carbohydrate structure, GalNAc-beta-1-3GlcNAc, on N- and O-glycans. Has no galactose nor galactosaminyl transferase activity toward any acceptor substrate. Involved in alpha-dystroglycan (dag1) glycosylation. In Xenopus tropicalis (Western clawed frog), this protein is UDP-GalNAc:beta-1,3-N-acetylgalactosaminyltransferase 2 (b3galnt2).